The following is an 822-amino-acid chain: Cadherin-3 (822 aa).

The signal sequence occupies residues 1–25; that stretch reads MELLSGPHAFLLLLLQVCWLRSVVS. A propeptide spanning residues 26–99 is cleaved from the precursor; that stretch reads EPYRAGFIGE…PTRILRRRKR (74 aa). Cadherin domains lie at 100–207, 208–320, 321–432, 433–538, and 539–645; these read EWVM…KPKF, TQDT…APEF, EPQK…APVF, VPPS…DHGP, and IPEP…RPWK. Topologically, residues 100–647 are extracellular; sequence EWVMPPIFVP…NDCPRPWKGG (548 aa). An N-linked (GlcNAc...) asparagine glycan is attached at Asn-192. Residue Asn-558 is glycosylated (N-linked (GlcNAc...) asparagine). A helical transmembrane segment spans residues 648 to 670; that stretch reads FILPILGAVLALLTLLLALLLLV. The Cytoplasmic segment spans residues 671–822; it reads RKKRKVKEPL…ADMYGGGEDD (152 aa).

In terms of assembly, interacts with CDCP1 and CTNNB1.

It is found in the cell membrane. Its function is as follows. Cadherins are calcium-dependent cell adhesion proteins. They preferentially interact with themselves in a homophilic manner in connecting cells; cadherins may thus contribute to the sorting of heterogeneous cell types. The polypeptide is Cadherin-3 (Cdh3) (Mus musculus (Mouse)).